We begin with the raw amino-acid sequence, 452 residues long: Lamina-associated polypeptide 2, isoforms beta/delta/epsilon/gamma (452 aa).

Residues 1–409 form a nucleoplasmic region; the sequence is MPEFLEDPSV…KSEKTKKRRS (409 aa). The region spanning 5–48 is the LEM-like domain; that stretch reads LEDPSVLTKDKLKSELVANNVTLPAGEQRKDVYVQLYLQHLTAR. 2 disordered regions span residues 48–111 and 149–263; these read RNRP…DLDV and REQG…RVET. The linker stretch occupies residues 49-108; sequence NRPPLAAGANSKGPPDFSSDEEREPTPVLGSGASVGRGRGAVGRKATKKTDKPRLEDKDD. Serine 59, serine 66, and serine 67 each carry phosphoserine. Position 74 is a phosphothreonine (threonine 74). A phosphoserine mark is found at serine 79 and serine 82. An omega-N-methylarginine mark is found at arginine 85 and arginine 87. The span at 96-105 shows a compositional bias: basic and acidic residues; it reads KKTDKPRLED. Residues 109-153 form the LEM domain; the sequence is LDVTELSNEELLDQLVRYGVNPGPIVGTTRKLYEKKLLKLREQGT. The tract at residues 137–242 is NAKAP95-binding N; it reads TRKLYEKKLL…TSGSSTGGPL (106 aa). A Phosphothreonine modification is found at threonine 153. Residues 154 to 177 show a composition bias toward polar residues; that stretch reads ESRSSTPLPTVSSSAENTRQNGSN. Serine 155 and serine 158 each carry phosphoserine. Phosphothreonine is present on residues threonine 159 and threonine 163. A phosphoserine mark is found at serine 165, serine 167, and serine 176. Residues 178 to 202 show a composition bias toward basic and acidic residues; sequence DSDRYSDNDEDSKIELKLEKREPLK. Serine 179 carries the phosphoserine; by PKC modification. Residues serine 183 and serine 189 each carry the phosphoserine modification. An N6-acetyllysine modification is found at lysine 206. A Phosphothreonine modification is found at threonine 210. Phosphoserine occurs at positions 221 and 223. Residues 226 to 240 show a composition bias toward low complexity; that stretch reads GVTETEWTSGSSTGG. Residues serine 249, serine 253, serine 264, serine 291, serine 305, and serine 306 each carry the phosphoserine modification. The tract at residues 298–370 is binds lamins B; the sequence is TGNFKHASSI…SCRRPIKGAA (73 aa). The interval 299 to 373 is NAKAP95-binding C; that stretch reads GNFKHASSIL…RPIKGAAGRP (75 aa). Residue threonine 311 is modified to Phosphothreonine. Residue serine 314 is modified to Phosphoserine. Arginine 319 carries the post-translational modification Citrulline. Phosphoserine is present on residues serine 361, serine 377, and serine 384. An N6-acetyllysine modification is found at lysine 388. A Glycyl lysine isopeptide (Lys-Gly) (interchain with G-Cter in SUMO2) cross-link involves residue lysine 400. A Phosphoserine modification is found at serine 401. A helical; Signal-anchor for type II membrane protein transmembrane segment spans residues 410–430; sequence VPMWIKMLLFALVAVFLFLVY. The Lumenal segment spans residues 431-452; that stretch reads QAMETNQGNPFTNFLQDTKISN.

This sequence belongs to the LEM family. As to quaternary structure, interacts with LMNB1, LMNB2, BANF1, AKAP8L, GMCL and chromosomes. In terms of processing, mitosis-specific phosphorylation specifically abolishes its binding to lamin B and chromosomes. Post-translationally, citrullinated by PADI4.

Its subcellular location is the nucleus inner membrane. The protein resides in the chromosome. Its function is as follows. May help direct the assembly of the nuclear lamina and thereby help maintain the structural organization of the nuclear envelope. Possible receptor for attachment of lamin filaments to the inner nuclear membrane. May be involved in the control of initiation of DNA replication through its interaction with NAKAP95. The chain is Lamina-associated polypeptide 2, isoforms beta/delta/epsilon/gamma (Tmpo) from Mus musculus (Mouse).